The chain runs to 88 residues: uncharacterized protein (88 aa).

Residues 34 to 54 traverse the membrane as a helical segment; that stretch reads IIIAVILIFFLTIVGLFYLII.

It localises to the membrane. This is an uncharacterized protein from Ureaplasma parvum serovar 3 (strain ATCC 700970).